Reading from the N-terminus, the 390-residue chain is Lipid-A-disaccharide synthase (390 aa).

Belongs to the LpxB family.

It catalyses the reaction a lipid X + a UDP-2-N,3-O-bis[(3R)-3-hydroxyacyl]-alpha-D-glucosamine = a lipid A disaccharide + UDP + H(+). It participates in bacterial outer membrane biogenesis; LPS lipid A biosynthesis. Functionally, condensation of UDP-2,3-diacylglucosamine and 2,3-diacylglucosamine-1-phosphate to form lipid A disaccharide, a precursor of lipid A, a phosphorylated glycolipid that anchors the lipopolysaccharide to the outer membrane of the cell. This chain is Lipid-A-disaccharide synthase, found in Haemophilus influenzae (strain PittEE).